The following is a 237-amino-acid chain: Phosphoribosylaminoimidazole-succinocarboxamide synthase (237 aa).

Belongs to the SAICAR synthetase family.

The enzyme catalyses 5-amino-1-(5-phospho-D-ribosyl)imidazole-4-carboxylate + L-aspartate + ATP = (2S)-2-[5-amino-1-(5-phospho-beta-D-ribosyl)imidazole-4-carboxamido]succinate + ADP + phosphate + 2 H(+). The protein operates within purine metabolism; IMP biosynthesis via de novo pathway; 5-amino-1-(5-phospho-D-ribosyl)imidazole-4-carboxamide from 5-amino-1-(5-phospho-D-ribosyl)imidazole-4-carboxylate: step 1/2. This is Phosphoribosylaminoimidazole-succinocarboxamide synthase from Pseudomonas fluorescens (strain SBW25).